The following is a 126-amino-acid chain: Probable 4-amino-4-deoxy-L-arabinose-phosphoundecaprenol flippase subunit ArnF (126 aa).

A helical transmembrane segment spans residues 1 to 21 (MGFLWALFSVGLVSAAQLLLR). The Periplasmic portion of the chain corresponds to 22–47 (SAMVALPPLTDIVAFLQHLLHFQPGT). The chain crosses the membrane as a helical span at residues 48–68 (VGLFFGLLGYLLSMVCWYFAL). Over 69–76 (HRLPLSKA) the chain is Cytoplasmic. A helical transmembrane segment spans residues 77–97 (YALLSLSYILVWAAAIWLPGW). Topologically, residues 98–100 (HEP) are periplasmic. The helical transmembrane segment at 101–121 (FYWQSLLGVTIIVAGVLTIFW) threads the bilayer. Residues 122–126 (PVKRR) are Cytoplasmic-facing.

The protein belongs to the ArnF family. As to quaternary structure, heterodimer of ArnE and ArnF.

It localises to the cell inner membrane. Its pathway is bacterial outer membrane biogenesis; lipopolysaccharide biosynthesis. Functionally, translocates 4-amino-4-deoxy-L-arabinose-phosphoundecaprenol (alpha-L-Ara4N-phosphoundecaprenol) from the cytoplasmic to the periplasmic side of the inner membrane. In Klebsiella pneumoniae (strain 342), this protein is Probable 4-amino-4-deoxy-L-arabinose-phosphoundecaprenol flippase subunit ArnF.